The sequence spans 156 residues: MSMKMKGIYKGFKCISQIFAVEKERDEIEIGFPTDVKHVAHIGWEGSSGSAPGWMSEFKVGAELLSPRPSSFSNARPSTSFFTSSSSTDFDQGSSQRGISDTLRDIPPVTPINLPKNNKKKSSRRKKSSSSSSSPKSSRSSVLSKSSYKSTVSRLI.

The CRIB domain occupies 30 to 43; it reads IGFPTDVKHVAHIG. A compositionally biased stretch (polar residues) spans 68 to 77; that stretch reads RPSSFSNARP. The disordered stretch occupies residues 68 to 156; sequence RPSSFSNARP…SYKSTVSRLI (89 aa). A compositionally biased stretch (low complexity) spans 78-96; it reads STSFFTSSSSTDFDQGSSQ. Over residues 117 to 128 the composition is skewed to basic residues; sequence NNKKKSSRRKKS. The span at 129 to 156 shows a compositional bias: low complexity; the sequence is SSSSSSPKSSRSSVLSKSSYKSTVSRLI.

In terms of tissue distribution, expressed in roots, leaves, flowers and pollen.

Its subcellular location is the cytoplasm. Functions as a downstream effector of Rho-related GTP binding proteins of the 'Rho of Plants' (ROPs) family. Participates in the propagation of ROP GTPase signals in specific cellular responses. Is involved in pollen tube growth regulation. This is CRIB domain-containing protein RIC10 (RIC10) from Arabidopsis thaliana (Mouse-ear cress).